Consider the following 689-residue polypeptide: Glycine--tRNA ligase beta subunit (689 aa).

Belongs to the class-II aminoacyl-tRNA synthetase family. As to quaternary structure, tetramer of two alpha and two beta subunits.

The protein resides in the cytoplasm. It catalyses the reaction tRNA(Gly) + glycine + ATP = glycyl-tRNA(Gly) + AMP + diphosphate. The chain is Glycine--tRNA ligase beta subunit from Shigella flexneri serotype 5b (strain 8401).